The primary structure comprises 490 residues: Betaine aldehyde dehydrogenase (490 aa).

Residues Ile27 and Asp93 each coordinate K(+). 150–152 (GAW) serves as a coordination point for NAD(+). Lys162 functions as the Charge relay system in the catalytic mechanism. NAD(+) is bound at residue 176 to 179 (KPSE). Val180 contributes to the K(+) binding site. 230 to 233 (GTDT) contributes to the NAD(+) binding site. Residue Leu246 participates in K(+) binding. Glu252 acts as the Proton acceptor in catalysis. Residues Gly254, Cys286, and Glu387 each coordinate NAD(+). The active-site Nucleophile is Cys286. Cys286 carries the cysteine sulfenic acid (-SOH) modification. Residues Lys457 and Gly460 each coordinate K(+). Glu464 acts as the Charge relay system in catalysis.

It belongs to the aldehyde dehydrogenase family. Dimer of dimers. Requires K(+) as cofactor.

The catalysed reaction is betaine aldehyde + NAD(+) + H2O = glycine betaine + NADH + 2 H(+). It functions in the pathway amine and polyamine biosynthesis; betaine biosynthesis via choline pathway; betaine from betaine aldehyde: step 1/1. Functionally, involved in the biosynthesis of the osmoprotectant glycine betaine. Catalyzes the irreversible oxidation of betaine aldehyde to the corresponding acid. This is Betaine aldehyde dehydrogenase from Pseudomonas fluorescens (strain SBW25).